The chain runs to 251 residues: Hydroxyacylglutathione hydrolase (251 aa).

Positions 53, 55, 57, 58, 110, 127, and 165 each coordinate Zn(2+).

The protein belongs to the metallo-beta-lactamase superfamily. Glyoxalase II family. As to quaternary structure, monomer. Requires Zn(2+) as cofactor.

The catalysed reaction is an S-(2-hydroxyacyl)glutathione + H2O = a 2-hydroxy carboxylate + glutathione + H(+). Its pathway is secondary metabolite metabolism; methylglyoxal degradation; (R)-lactate from methylglyoxal: step 2/2. Thiolesterase that catalyzes the hydrolysis of S-D-lactoyl-glutathione to form glutathione and D-lactic acid. This chain is Hydroxyacylglutathione hydrolase, found in Erwinia tasmaniensis (strain DSM 17950 / CFBP 7177 / CIP 109463 / NCPPB 4357 / Et1/99).